Reading from the N-terminus, the 396-residue chain is 1-deoxy-D-xylulose 5-phosphate reductoisomerase (396 aa).

Positions 13, 14, 15, 16, and 127 each coordinate NADPH. K128 contacts 1-deoxy-D-xylulose 5-phosphate. E129 provides a ligand contact to NADPH. D153 is a Mn(2+) binding site. Positions 154, 155, 184, and 207 each coordinate 1-deoxy-D-xylulose 5-phosphate. E155 contacts Mn(2+). Residue G213 coordinates NADPH. S220, N225, K226, and E229 together coordinate 1-deoxy-D-xylulose 5-phosphate. Mn(2+) is bound at residue E229.

This sequence belongs to the DXR family. The cofactor is Mg(2+). Requires Mn(2+) as cofactor.

It carries out the reaction 2-C-methyl-D-erythritol 4-phosphate + NADP(+) = 1-deoxy-D-xylulose 5-phosphate + NADPH + H(+). The protein operates within isoprenoid biosynthesis; isopentenyl diphosphate biosynthesis via DXP pathway; isopentenyl diphosphate from 1-deoxy-D-xylulose 5-phosphate: step 1/6. Catalyzes the NADPH-dependent rearrangement and reduction of 1-deoxy-D-xylulose-5-phosphate (DXP) to 2-C-methyl-D-erythritol 4-phosphate (MEP). The chain is 1-deoxy-D-xylulose 5-phosphate reductoisomerase from Pseudomonas paraeruginosa (strain DSM 24068 / PA7) (Pseudomonas aeruginosa (strain PA7)).